Consider the following 123-residue polypeptide: Small ribosomal subunit protein uS12 (123 aa).

3-methylthioaspartic acid is present on Asp-89. The interval 102–123 (LDTQGVKDRKQGRSKYGAKRPK) is disordered. A compositionally biased stretch (basic residues) spans 113–123 (GRSKYGAKRPK).

This sequence belongs to the universal ribosomal protein uS12 family. As to quaternary structure, part of the 30S ribosomal subunit. Contacts proteins S8 and S17. May interact with IF1 in the 30S initiation complex.

Its function is as follows. With S4 and S5 plays an important role in translational accuracy. In terms of biological role, interacts with and stabilizes bases of the 16S rRNA that are involved in tRNA selection in the A site and with the mRNA backbone. Located at the interface of the 30S and 50S subunits, it traverses the body of the 30S subunit contacting proteins on the other side and probably holding the rRNA structure together. The combined cluster of proteins S8, S12 and S17 appears to hold together the shoulder and platform of the 30S subunit. The protein is Small ribosomal subunit protein uS12 of Magnetococcus marinus (strain ATCC BAA-1437 / JCM 17883 / MC-1).